We begin with the raw amino-acid sequence, 353 residues long: UDP-3-O-acylglucosamine N-acyltransferase (353 aa).

The active-site Proton acceptor is the H258.

It belongs to the transferase hexapeptide repeat family. LpxD subfamily. As to quaternary structure, homotrimer.

It carries out the reaction a UDP-3-O-[(3R)-3-hydroxyacyl]-alpha-D-glucosamine + a (3R)-hydroxyacyl-[ACP] = a UDP-2-N,3-O-bis[(3R)-3-hydroxyacyl]-alpha-D-glucosamine + holo-[ACP] + H(+). The protein operates within bacterial outer membrane biogenesis; LPS lipid A biosynthesis. Catalyzes the N-acylation of UDP-3-O-acylglucosamine using 3-hydroxyacyl-ACP as the acyl donor. Is involved in the biosynthesis of lipid A, a phosphorylated glycolipid that anchors the lipopolysaccharide to the outer membrane of the cell. The protein is UDP-3-O-acylglucosamine N-acyltransferase of Parvibaculum lavamentivorans (strain DS-1 / DSM 13023 / NCIMB 13966).